The sequence spans 466 residues: MGKTLFEKVWNAHVVTEVKDGPSILYIDKQLIHEVTSPQAFAGIEKRGIGVFRPERTLATPDHNVPTKGQNLPIVEDLSRFQVDKLTENCNKFGVTLYGLGHASQGVVHVVGPETGTTLPGMTIVCGDSHTSTHGAFGSIAFGIGTSEVEQVLATQCLMQTKAKTLKIEINGKLAKGVTAKDVILYVIAQISAAGGTGYFVEYCGSAITSLSMEARMTICNMSIEMGARGGMIAPDETTFNYIKGREFAPKGAKWDEAVAYWKTLYSDSDAVFDKTLKYDAADIGPMITYGTNPGMGISVNKNIPSLDSIEESNKVTFNKALDYMGFHAGDSLIGKQVNWVFLGSCTNGRIEDLRQFAEFVKGKQKAANINALIVPGSKQVEKQAIAEGIDKVLAEAGFELREPGCSACLAMNEDKVPKGEYCVSTSNRNFEGRQGPGARTLLVSPLTAAAIAVSGKIVDVREMLN.

Residues cysteine 346, cysteine 406, and cysteine 409 each contribute to the [4Fe-4S] cluster site.

The protein belongs to the aconitase/IPM isomerase family. LeuC type 1 subfamily. In terms of assembly, heterodimer of LeuC and LeuD. It depends on [4Fe-4S] cluster as a cofactor.

It catalyses the reaction (2R,3S)-3-isopropylmalate = (2S)-2-isopropylmalate. It participates in amino-acid biosynthesis; L-leucine biosynthesis; L-leucine from 3-methyl-2-oxobutanoate: step 2/4. Its function is as follows. Catalyzes the isomerization between 2-isopropylmalate and 3-isopropylmalate, via the formation of 2-isopropylmaleate. The polypeptide is 3-isopropylmalate dehydratase large subunit (Cytophaga hutchinsonii (strain ATCC 33406 / DSM 1761 / CIP 103989 / NBRC 15051 / NCIMB 9469 / D465)).